The following is a 489-amino-acid chain: Lysine--tRNA ligase (489 aa).

Mg(2+) is bound by residues Glu398 and Glu405.

This sequence belongs to the class-II aminoacyl-tRNA synthetase family. In terms of assembly, homodimer. Mg(2+) serves as cofactor.

It is found in the cytoplasm. The enzyme catalyses tRNA(Lys) + L-lysine + ATP = L-lysyl-tRNA(Lys) + AMP + diphosphate. This chain is Lysine--tRNA ligase, found in Moorella thermoacetica (strain ATCC 39073 / JCM 9320).